The sequence spans 304 residues: ATP phosphoribosyltransferase (304 aa).

The protein belongs to the ATP phosphoribosyltransferase family. Long subfamily. The cofactor is Mg(2+).

The protein resides in the cytoplasm. The enzyme catalyses 1-(5-phospho-beta-D-ribosyl)-ATP + diphosphate = 5-phospho-alpha-D-ribose 1-diphosphate + ATP. It functions in the pathway amino-acid biosynthesis; L-histidine biosynthesis; L-histidine from 5-phospho-alpha-D-ribose 1-diphosphate: step 1/9. Feedback inhibited by histidine. Catalyzes the condensation of ATP and 5-phosphoribose 1-diphosphate to form N'-(5'-phosphoribosyl)-ATP (PR-ATP). Has a crucial role in the pathway because the rate of histidine biosynthesis seems to be controlled primarily by regulation of HisG enzymatic activity. The chain is ATP phosphoribosyltransferase from Xanthomonas campestris pv. campestris (strain B100).